Here is a 264-residue protein sequence, read N- to C-terminus: Sexual differentiation protein ste4 (264 aa).

Residues 11–73 form the SAM domain; that stretch reads WNNEAVCNWI…LSAIQSMKKQ (63 aa). Positions 111-139 are leucine-zipper; that stretch reads LEKRVEYLETENTKLVKTLNSLNSEFLQL. A Ras-associating domain is found at 176 to 264; sequence GSFDLEVNDS…PSFVLSRRSC (89 aa).

As to quaternary structure, homodimer or heterodimer with another leucine-zipper protein.

Its function is as follows. Essential for mating and meiosis. This Schizosaccharomyces pombe (strain 972 / ATCC 24843) (Fission yeast) protein is Sexual differentiation protein ste4 (ste4).